A 1117-amino-acid polypeptide reads, in one-letter code: A disintegrin and metalloproteinase with thrombospondin motifs 6 (1117 aa).

The signal sequence occupies residues 1-21 (MEILWKTLTWILSLIMASSEF). A propeptide spanning residues 22–244 (HSDHRLSYSS…NTHIHHRQKR (223 aa)) is cleaved from the precursor. Residues Asn-99, Asn-172, Asn-222, and Asn-234 are each glycosylated (N-linked (GlcNAc...) asparagine). Residues 250–468 (RFVETLVVAD…GRGTCLDNEP (219 aa)) form the Peptidase M12B domain. Intrachain disulfides connect Cys-326–Cys-387, Cys-362–Cys-369, Cys-381–Cys-463, Cys-420–Cys-447, Cys-490–Cys-512, Cys-501–Cys-519, Cys-507–Cys-542, Cys-532–Cys-547, Cys-570–Cys-607, Cys-574–Cys-612, and Cys-585–Cys-597. His-403 is a binding site for Zn(2+). The active site involves Glu-404. Residues His-407 and His-413 each coordinate Zn(2+). The Disintegrin domain occupies 495-557 (GATSRQCKYG…VPFGTWPQSI (63 aa)). Positions 558 to 613 (DGGWGPWSLWGECSRTCGGGVSSSLRHCDSPAPSGGGKYCLGERKRYRSCNTDPCP) constitute a TSP type-1 1 domain. The tract at residues 717-843 (DAIEGFFNDS…GSGDNEVGFT (127 aa)) is spacer. Residue Asn-724 is glycosylated (N-linked (GlcNAc...) asparagine). TSP type-1 domains lie at 840 to 900 (VGFT…EPCP), 902 to 960 (EWFI…QSCP), 962 to 1007 (QWVA…SKPP), and 1018 to 1073 (PPPR…SKCD). Intrachain disulfides connect Cys-911–Cys-954, Cys-915–Cys-959, and Cys-926–Cys-943. The N-linked (GlcNAc...) asparagine glycan is linked to Asn-956. The PLAC domain occupies 1079–1117 (NTEECKDVNKVAYCPLVLKFKFCSRAYFRQMCCKTCQGH).

Requires Zn(2+) as cofactor. The precursor is cleaved by a furin endopeptidase. In terms of processing, glycosylated. Can be O-fucosylated by POFUT2 on a serine or a threonine residue found within the consensus sequence C1-X(2)-(S/T)-C2-G of the TSP type-1 repeat domains where C1 and C2 are the first and second cysteine residue of the repeat, respectively. Fucosylated repeats can then be further glycosylated by the addition of a beta-1,3-glucose residue by the glucosyltransferase, B3GALTL. Fucosylation mediates the efficient secretion of ADAMTS family members. Can also be C-glycosylated with one or two mannose molecules on tryptophan residues within the consensus sequence W-X-X-W of the TPRs, and N-glycosylated. These other glycosylations can also facilitate secretion. In terms of tissue distribution, expressed at low levels in placenta and barely detectable in a number of other tissues.

The protein resides in the secreted. It localises to the extracellular space. Its subcellular location is the extracellular matrix. This is A disintegrin and metalloproteinase with thrombospondin motifs 6 (ADAMTS6) from Homo sapiens (Human).